Reading from the N-terminus, the 480-residue chain is Endo-1,6-beta-D-glucanase (480 aa).

The N-terminal stretch at 1–17 (MYPPALTLLLTPGLVAA) is a signal peptide. N-linked (GlcNAc...) asparagine glycosylation is present at N50. Catalysis depends on E225, which acts as the Proton donor. The active-site Nucleophile is E321.

The protein belongs to the glycosyl hydrolase 30 family.

It localises to the secreted. It catalyses the reaction Random hydrolysis of (1-&gt;6)-linkages in (1-&gt;6)-beta-D-glucans.. Functionally, partially degrades N.crassa cell wall beta-D-glucan, liberating small amounts of oligosaccharides. The sequence is that of Endo-1,6-beta-D-glucanase (neg-1) from Neurospora crassa (strain ATCC 24698 / 74-OR23-1A / CBS 708.71 / DSM 1257 / FGSC 987).